A 1063-amino-acid chain; its full sequence is MSHIQQAVDIANSSTAGNDLKKQALDFLQQLKSSEDAVQVFSQYLQDPVASDVGRFFALQVLSEQALELPANHEKLYALQQSALQFLRTQLENSSSDGARVSGVGQGSKGVKSTPPEFVRNKVAELFAHLFYNMYGEVNNNMWSSFFVDLIQLVGIASLRDSKSTGVEFNAIGLDLFFRICASINTEIGDQAFVRSKEVQLKNNELKDYMRVQDVELLSNIWFSALLNCQQLPVLASLVLQCVGSYISWIDINLIVQQSYIGTIYEYLKFPQTKLACGQCLCEIISKKMKPADKLQLLSMLNLTDRVVATGSAEDLDVLEQMAKLTNGVALELSMVMDQCNDSQELQSVSSAADEQIINVVSPLVLKFMAHEYDSVTQQCFSFVTNYLAVMKKLFALGGKPGSAVAVNSKRIPIDPAHLNFLKSLGTVCVLKMKIDDSCDSIDDNEEIDEFVENIRSKLKTFQDSIAVINPELYFDIISDNIEQSITEQQDWRVLELAIYQLHNFAESIRNNLFGVNKTEISTSKPAQLMEKYMTTLLNHPTLFQMNNPLVQISFFELVVRHNNFIQVENKDLTLLNIFCTPFSMFSGNERVRLRTWYLFTRLIKTSKPKLSTDFLSMLLSKISPLLSIKASPLAQELDTIFDSQLYLFEGTGVLIGANVNNEYEILDGVLTPLFADLEQCISAQVKNPQVVLQTHHILMAIGTVARGVHSGLVPDNQVNNAKVSERVICKSLIEKFSNIAEVILVTFSYFNKFETIRDAARFSFSRLIPILNNQIIPFASRLISIFLNSDLKPLEMGDFIGFLGQMIHMFKDDDNCYQLFNNLFTPVVEKVFTLETQLEQESSTSSESKSSNGKNVIVTDSFREKINLKKSYYGLLATFVSNNCTSLLLTESNKNILPRVLTDLLSYTAEEIHETSTMKLSINVLVNFINFFGTGICTDPKDRNAINVNKLDGLNEFFITTSIPLLFEIPFKPEYEFNIQDGGCRVIACDLSRLLKALYNINNSSTNNNINENACVKYLTEIYFPQIQFPQSLVVEFINALGTLDAKQFEKYFVQFITNMKQ.

Belongs to the exportin family.

The protein resides in the nucleus. It localises to the cytoplasm. TRNA nucleus export receptor which facilitates tRNA translocation across the nuclear pore complex. Involved in pre-tRNA splicing, probably by affecting the interaction of pre-tRNA with splicing endonuclease. This Kluyveromyces lactis (strain ATCC 8585 / CBS 2359 / DSM 70799 / NBRC 1267 / NRRL Y-1140 / WM37) (Yeast) protein is Exportin-T (LOS1).